The sequence spans 492 residues: Cysteine--tRNA ligase (492 aa).

Cys35 contributes to the Zn(2+) binding site. Residues 37-47 carry the 'HIGH' region motif; the sequence is PTVYSNVHLGN. Positions 230, 255, and 259 each coordinate Zn(2+). Positions 287 to 291 match the 'KMSKS' region motif; it reads KMAKS. Residue Lys290 coordinates ATP.

Belongs to the class-I aminoacyl-tRNA synthetase family. As to quaternary structure, monomer. The cofactor is Zn(2+).

The protein localises to the cytoplasm. It carries out the reaction tRNA(Cys) + L-cysteine + ATP = L-cysteinyl-tRNA(Cys) + AMP + diphosphate. The sequence is that of Cysteine--tRNA ligase from Flavobacterium johnsoniae (strain ATCC 17061 / DSM 2064 / JCM 8514 / BCRC 14874 / CCUG 350202 / NBRC 14942 / NCIMB 11054 / UW101) (Cytophaga johnsonae).